The primary structure comprises 247 residues: Segregation and condensation protein A (247 aa).

The protein belongs to the ScpA family. As to quaternary structure, component of a cohesin-like complex composed of ScpA, ScpB and the Smc homodimer, in which ScpA and ScpB bind to the head domain of Smc. The presence of the three proteins is required for the association of the complex with DNA.

It is found in the cytoplasm. Functionally, participates in chromosomal partition during cell division. May act via the formation of a condensin-like complex containing Smc and ScpB that pull DNA away from mid-cell into both cell halves. The protein is Segregation and condensation protein A of Lactobacillus gasseri (strain ATCC 33323 / DSM 20243 / BCRC 14619 / CIP 102991 / JCM 1131 / KCTC 3163 / NCIMB 11718 / NCTC 13722 / AM63).